Reading from the N-terminus, the 325-residue chain is NADH-quinone oxidoreductase subunit H (325 aa).

Transmembrane regions (helical) follow at residues 8–28 (VIDI…VVTC), 81–101 (GIFT…FAIV), 114–134 (IGVL…LFAG), 159–179 (FLGL…LGAI), 186–206 (LWNV…GVAV), 237–257 (FFVG…TLFF), 265–285 (LPPF…FILI), and 304–324 (ICLP…LYNA).

It belongs to the complex I subunit 1 family. In terms of assembly, NDH-1 is composed of 13 different subunits. Subunits NuoA, H, J, K, L, M, N constitute the membrane sector of the complex.

The protein resides in the cell inner membrane. The catalysed reaction is a quinone + NADH + 5 H(+)(in) = a quinol + NAD(+) + 4 H(+)(out). Functionally, NDH-1 shuttles electrons from NADH, via FMN and iron-sulfur (Fe-S) centers, to quinones in the respiratory chain. The immediate electron acceptor for the enzyme in this species is believed to be ubiquinone. Couples the redox reaction to proton translocation (for every two electrons transferred, four hydrogen ions are translocated across the cytoplasmic membrane), and thus conserves the redox energy in a proton gradient. This subunit may bind ubiquinone. This is NADH-quinone oxidoreductase subunit H from Sodalis glossinidius (strain morsitans).